The sequence spans 472 residues: Siroheme synthase (472 aa).

Residues 1–204 (MDYLPIFTKL…GQTEKAIALM (204 aa)) are precorrin-2 dehydrogenase /sirohydrochlorin ferrochelatase. NAD(+)-binding positions include 22 to 23 (SI) and 43 to 44 (LE). Residue S128 is modified to Phosphoserine. Residues 215–472 (GDVALVGAGP…SRDPFLVNLA (258 aa)) form a uroporphyrinogen-III C-methyltransferase region. P224 contacts S-adenosyl-L-methionine. The active-site Proton acceptor is the D247. Catalysis depends on K269, which acts as the Proton donor. S-adenosyl-L-methionine-binding positions include 300–302 (GGD), I305, 330–331 (TA), M382, and G411.

This sequence in the N-terminal section; belongs to the precorrin-2 dehydrogenase / sirohydrochlorin ferrochelatase family. The protein in the C-terminal section; belongs to the precorrin methyltransferase family.

The enzyme catalyses uroporphyrinogen III + 2 S-adenosyl-L-methionine = precorrin-2 + 2 S-adenosyl-L-homocysteine + H(+). The catalysed reaction is precorrin-2 + NAD(+) = sirohydrochlorin + NADH + 2 H(+). It carries out the reaction siroheme + 2 H(+) = sirohydrochlorin + Fe(2+). The protein operates within cofactor biosynthesis; adenosylcobalamin biosynthesis; precorrin-2 from uroporphyrinogen III: step 1/1. It participates in cofactor biosynthesis; adenosylcobalamin biosynthesis; sirohydrochlorin from precorrin-2: step 1/1. Its pathway is porphyrin-containing compound metabolism; siroheme biosynthesis; precorrin-2 from uroporphyrinogen III: step 1/1. It functions in the pathway porphyrin-containing compound metabolism; siroheme biosynthesis; siroheme from sirohydrochlorin: step 1/1. The protein operates within porphyrin-containing compound metabolism; siroheme biosynthesis; sirohydrochlorin from precorrin-2: step 1/1. Multifunctional enzyme that catalyzes the SAM-dependent methylations of uroporphyrinogen III at position C-2 and C-7 to form precorrin-2 via precorrin-1. Then it catalyzes the NAD-dependent ring dehydrogenation of precorrin-2 to yield sirohydrochlorin. Finally, it catalyzes the ferrochelation of sirohydrochlorin to yield siroheme. The sequence is that of Siroheme synthase from Psychromonas ingrahamii (strain DSM 17664 / CCUG 51855 / 37).